A 294-amino-acid chain; its full sequence is uncharacterized protein (294 aa).

Residues 1-16 (MQNFMVLLLLIVAVVA) form the signal peptide. Residues Asn-25 and Asn-162 are each glycosylated (N-linked (GlcNAc...) asparagine; by host).

This is an uncharacterized protein from Acheta domesticus (House cricket).